The following is a 224-amino-acid chain: Pyridoxine/pyridoxamine 5'-phosphate oxidase (224 aa).

Substrate-binding positions include 14-17 (REHY) and Lys76. Residues 71–76 (RTVLMK), 86–87 (YT), Arg92, Lys93, and Gln115 contribute to the FMN site. The substrate site is built by Tyr133, Arg137, and Ser141. Residues 150–151 (QS) and Trp196 contribute to the FMN site. 202 to 204 (RLH) lines the substrate pocket. Arg206 serves as a coordination point for FMN.

Belongs to the pyridoxamine 5'-phosphate oxidase family. Homodimer. FMN serves as cofactor.

It catalyses the reaction pyridoxamine 5'-phosphate + O2 + H2O = pyridoxal 5'-phosphate + H2O2 + NH4(+). It carries out the reaction pyridoxine 5'-phosphate + O2 = pyridoxal 5'-phosphate + H2O2. Its pathway is cofactor metabolism; pyridoxal 5'-phosphate salvage; pyridoxal 5'-phosphate from pyridoxamine 5'-phosphate: step 1/1. It participates in cofactor metabolism; pyridoxal 5'-phosphate salvage; pyridoxal 5'-phosphate from pyridoxine 5'-phosphate: step 1/1. Its function is as follows. Catalyzes the oxidation of either pyridoxine 5'-phosphate (PNP) or pyridoxamine 5'-phosphate (PMP) into pyridoxal 5'-phosphate (PLP). This chain is Pyridoxine/pyridoxamine 5'-phosphate oxidase, found in Streptomyces avermitilis (strain ATCC 31267 / DSM 46492 / JCM 5070 / NBRC 14893 / NCIMB 12804 / NRRL 8165 / MA-4680).